A 341-amino-acid chain; its full sequence is Cysteine and histidine-rich domain-containing protein 1 (341 aa).

Zn(2+) is bound by residues Cys5, Cys10, Cys24, His27, Cys42, Cys43, Cys59, His64, Cys155, Cys160, Cys174, His177, Cys192, Cys193, Cys209, and His214. 2 CHORD domains span residues 5–64 and 155–214; these read CYNK…KGPH and CKNG…RGKH. Positions 61–81 are disordered; it reads KGPHNQEKPAEPVKPEVKSSL. The segment covering 64–81 has biased composition (basic and acidic residues); sequence HNQEKPAEPVKPEVKSSL. The CS domain occupies 225–314; it reads VVPCRFDWHQ…AEPMSWARLD (90 aa). Positions 313–341 are disordered; sequence LDLPPVAPPKEKEKEKDVDSEDECDDDED. A compositionally biased stretch (acidic residues) spans 330 to 341; that stretch reads VDSEDECDDDED.

Its function is as follows. Regulates centrosome duplication. This is Cysteine and histidine-rich domain-containing protein 1 (chordc1) from Danio rerio (Zebrafish).